Here is a 40-residue protein sequence, read N- to C-terminus: Photosystem II reaction center protein J (40 aa).

Residues 8-28 form a helical membrane-spanning segment; the sequence is IPLWIIGTVAGILVIGLIGIF.

It belongs to the PsbJ family. As to quaternary structure, PSII is composed of 1 copy each of membrane proteins PsbA, PsbB, PsbC, PsbD, PsbE, PsbF, PsbH, PsbI, PsbJ, PsbK, PsbL, PsbM, PsbT, PsbX, PsbY, PsbZ, Psb30/Ycf12, at least 3 peripheral proteins of the oxygen-evolving complex and a large number of cofactors. It forms dimeric complexes.

The protein localises to the plastid. It is found in the chloroplast thylakoid membrane. Its function is as follows. One of the components of the core complex of photosystem II (PSII). PSII is a light-driven water:plastoquinone oxidoreductase that uses light energy to abstract electrons from H(2)O, generating O(2) and a proton gradient subsequently used for ATP formation. It consists of a core antenna complex that captures photons, and an electron transfer chain that converts photonic excitation into a charge separation. This is Photosystem II reaction center protein J from Oenothera elata subsp. hookeri (Hooker's evening primrose).